Here is a 999-residue protein sequence, read N- to C-terminus: Sarcoplasmic/endoplasmic reticulum calcium ATPase 3 (999 aa).

Position 1 is an N-acetylmethionine (Met1). Topologically, residues 1–48 are cytoplasmic; the sequence is MEEAHLLPAADVLRRFSVTAEGGLSPAQVTRARERYGPNELPTEEGKS. At Ser17 the chain carries Phosphoserine. Residue Thr19 is modified to Phosphothreonine. Ser25 carries the phosphoserine modification. Residues 49–69 traverse the membrane as a helical segment; sequence LWELVLEQFEDLLVRILLLAA. The Extracellular portion of the chain corresponds to 70–89; it reads LVSFVLACFEEGEETTTAFV. A helical membrane pass occupies residues 90–110; sequence EPLVIVLILVANAVVGVWQER. Residues 111-253 are Cytoplasmic-facing; sequence NAENAIEALK…PERTPLQQKL (143 aa). A helical transmembrane segment spans residues 254-273; that stretch reads DEFGRQLSRAISVICMAVWV. The Extracellular portion of the chain corresponds to 274–295; sequence INIGHFADPAHGGSWLRGAVYY. Residues 296–313 traverse the membrane as a helical segment; the sequence is FKIAVALAVAAIPEGLPA. The Ca(2+) site is built by Val304, Ala305, Ile307, and Glu309. The Cytoplasmic portion of the chain corresponds to 314-757; sequence VITTCLALGT…EEGRAIYSNM (444 aa). The active-site 4-aspartylphosphate intermediate is the Asp351. 2 residues coordinate Mg(2+): Asp351 and Thr353. ATP is bound at residue Thr353. The interval 370–400 is interaction with phospholamban 1; that stretch reads AEAEAGTCRLHEFTISGTTYAPEGEVRQGEQ. Phosphothreonine is present on Thr415. Residues Glu442, Arg489, Lys515, Arg560, Thr625, Gly626, and Asp627 each coordinate ATP. Position 662 is a phosphoserine (Ser662). Positions 678 and 684 each coordinate ATP. Asp703 serves as a coordination point for Mg(2+). Asn706 contacts ATP. The helical transmembrane segment at 758 to 777 threads the bilayer; the sequence is KQFIRYLISSNVGEVVCIFL. Ca(2+) is bound by residues Asn768 and Glu771. Topologically, residues 778–787 are extracellular; that stretch reads TAILGLPEAL. Residues 788-808 form a helical membrane-spanning segment; sequence IPVQLLWVNLVTDGLPATALG. Residues 788 to 808 are interaction with phospholamban 2; sequence IPVQLLWVNLVTDGLPATALG. Ca(2+) is bound by residues Asn796, Thr799, and Asp800. At 809 to 828 the chain is on the cytoplasmic side; it reads FNPPDLDIMEKRPRNPREAL. Residues 829–851 traverse the membrane as a helical segment; that stretch reads ISGWLFFRYLAIGVYVGLATVAA. Topologically, residues 852–897 are extracellular; sequence ATWWFLYDAEGPQVTFYQLRNFLKCSEDNPLFTGTDCEVFESRFPT. An intrachain disulfide couples Cys876 to Cys888. A helical transmembrane segment spans residues 898 to 917; it reads TMALSVLVTTEMCNALNSVS. Glu908 contacts Ca(2+). The Cytoplasmic portion of the chain corresponds to 918–930; the sequence is ENQSLLRMPPWLN. Residues 931 to 949 traverse the membrane as a helical segment; the sequence is PWLLAAVAMSMALHFLILL. Residues 950 to 964 are Extracellular-facing; it reads VPPLPLIFQVTPLSG. The helical transmembrane segment at 965-985 threads the bilayer; it reads RQWVVVLQISLPVILLDEALK. At 986-999 the chain is on the cytoplasmic side; sequence YLSRKHVDEEKGRQ.

Belongs to the cation transport ATPase (P-type) (TC 3.A.3) family. Type IIA subfamily. As to quaternary structure, interacts with sarcolipin (SLN). Interacts with phospholamban (PLN). Interacts with myoregulin (MRLN). Interacts with DWORF. Interacts with VMP1. Interacts with TUNAR; the interaction occurs at low levels in low glucose conditions and is increased by high glucose levels. Mg(2+) is required as a cofactor. As to expression, expressed in endothelial tissues.

Its subcellular location is the endoplasmic reticulum membrane. It localises to the sarcoplasmic reticulum membrane. The catalysed reaction is Ca(2+)(in) + ATP + H2O = Ca(2+)(out) + ADP + phosphate + H(+). With respect to regulation, inhibited by sarcolipin (SLN), phospholamban (PLN) and myoregulin (MRLN). Enhanced by DWORF; DWORF increases activity by displacing sarcolipin (SLN), phospholamban (PLN) and myoregulin (MRLN). In terms of biological role, this magnesium-dependent enzyme catalyzes the hydrolysis of ATP coupled with the transport of calcium. Transports calcium ions from the cytosol into the sarcoplasmic/endoplasmic reticulum lumen. Contributes to calcium sequestration involved in muscular excitation/contraction. The polypeptide is Sarcoplasmic/endoplasmic reticulum calcium ATPase 3 (ATP2A3) (Sus scrofa (Pig)).